The chain runs to 288 residues: 2-dehydro-3-deoxyphosphooctonate aldolase (288 aa).

The protein belongs to the KdsA family.

The protein localises to the cytoplasm. It carries out the reaction D-arabinose 5-phosphate + phosphoenolpyruvate + H2O = 3-deoxy-alpha-D-manno-2-octulosonate-8-phosphate + phosphate. It functions in the pathway carbohydrate biosynthesis; 3-deoxy-D-manno-octulosonate biosynthesis; 3-deoxy-D-manno-octulosonate from D-ribulose 5-phosphate: step 2/3. It participates in bacterial outer membrane biogenesis; lipopolysaccharide biosynthesis. This chain is 2-dehydro-3-deoxyphosphooctonate aldolase, found in Syntrophobacter fumaroxidans (strain DSM 10017 / MPOB).